Here is a 158-residue protein sequence, read N- to C-terminus: Phosphopantetheine adenylyltransferase (158 aa).

Thr10 serves as a coordination point for substrate. ATP-binding positions include 10-11 and His18; that span reads TF. Residues Lys42, Leu74, and Arg88 each contribute to the substrate site. Residues 89-91, Glu99, and 124-130 each bind ATP; these read GLR and NSFISST.

Belongs to the bacterial CoaD family. As to quaternary structure, homohexamer. Mg(2+) serves as cofactor.

The protein localises to the cytoplasm. It carries out the reaction (R)-4'-phosphopantetheine + ATP + H(+) = 3'-dephospho-CoA + diphosphate. The protein operates within cofactor biosynthesis; coenzyme A biosynthesis; CoA from (R)-pantothenate: step 4/5. Functionally, reversibly transfers an adenylyl group from ATP to 4'-phosphopantetheine, yielding dephospho-CoA (dPCoA) and pyrophosphate. The sequence is that of Phosphopantetheine adenylyltransferase from Shewanella loihica (strain ATCC BAA-1088 / PV-4).